A 689-amino-acid chain; its full sequence is Glycine--tRNA ligase beta subunit (689 aa).

The protein belongs to the class-II aminoacyl-tRNA synthetase family. In terms of assembly, tetramer of two alpha and two beta subunits.

It localises to the cytoplasm. It carries out the reaction tRNA(Gly) + glycine + ATP = glycyl-tRNA(Gly) + AMP + diphosphate. This is Glycine--tRNA ligase beta subunit from Erwinia tasmaniensis (strain DSM 17950 / CFBP 7177 / CIP 109463 / NCPPB 4357 / Et1/99).